The primary structure comprises 380 residues: Protein COS12 (380 aa).

Topologically, residues 1–70 (MDGAKFENTV…WKIRGKRHYL (70 aa)) are cytoplasmic. The helical transmembrane segment at 71–91 (VIVTALMFEVLYFLWTYSYIF) threads the bilayer. Residues 92 to 231 (RERTLGKQVS…KLLWAFKEVT (140 aa)) lie on the Extracellular side of the membrane. Residues 232–252 (IMNSRFAFFSIAYLNGLLTIP) form a helical membrane-spanning segment. Residues 253 to 257 (RLRNS) lie on the Cytoplasmic side of the membrane. A helical transmembrane segment spans residues 258–278 (LHILYVCAVLSSMIIEYLIGI). Topologically, residues 279-380 (DKFRFKSMNL…KEAQSACNDV (102 aa)) are extracellular.

It belongs to the DUP/COS family.

It localises to the membrane. This chain is Protein COS12 (COS12), found in Saccharomyces cerevisiae (strain ATCC 204508 / S288c) (Baker's yeast).